We begin with the raw amino-acid sequence, 385 residues long: Serine/threonine-protein kinase H2 (385 aa).

Positions tyrosine 63–valine 320 constitute a Protein kinase domain. ATP contacts are provided by residues isoleucine 69–valine 77 and lysine 92. The segment at glutamine 342–histidine 367 is disordered. The span at alanine 344–serine 359 shows a compositional bias: low complexity.

This sequence belongs to the protein kinase superfamily. CAMK Ser/Thr protein kinase family.

The enzyme catalyses L-seryl-[protein] + ATP = O-phospho-L-seryl-[protein] + ADP + H(+). The catalysed reaction is L-threonyl-[protein] + ATP = O-phospho-L-threonyl-[protein] + ADP + H(+). The protein is Serine/threonine-protein kinase H2 (PSKH2) of Homo sapiens (Human).